Reading from the N-terminus, the 141-residue chain is Large ribosomal subunit protein uL11 (141 aa).

Belongs to the universal ribosomal protein uL11 family. Part of the ribosomal stalk of the 50S ribosomal subunit. Interacts with L10 and the large rRNA to form the base of the stalk. L10 forms an elongated spine to which L12 dimers bind in a sequential fashion forming a multimeric L10(L12)X complex. One or more lysine residues are methylated.

Functionally, forms part of the ribosomal stalk which helps the ribosome interact with GTP-bound translation factors. This is Large ribosomal subunit protein uL11 from Chloroherpeton thalassium (strain ATCC 35110 / GB-78).